Here is a 274-residue protein sequence, read N- to C-terminus: Shikimate dehydrogenase (NADP(+)) (274 aa).

Shikimate-binding positions include 14 to 16 and Thr-60; that span reads SKS. The active-site Proton acceptor is the Lys-64. Glu-76 lines the NADP(+) pocket. The shikimate site is built by Asn-85 and Asp-101. NADP(+) is bound by residues 126–130, 150–155, and Met-214; these read GAGGA and NRTARK. Tyr-216 is a binding site for shikimate. Position 238 (Gly-238) interacts with NADP(+).

Belongs to the shikimate dehydrogenase family. Homodimer.

The catalysed reaction is shikimate + NADP(+) = 3-dehydroshikimate + NADPH + H(+). It participates in metabolic intermediate biosynthesis; chorismate biosynthesis; chorismate from D-erythrose 4-phosphate and phosphoenolpyruvate: step 4/7. Involved in the biosynthesis of the chorismate, which leads to the biosynthesis of aromatic amino acids. Catalyzes the reversible NADPH linked reduction of 3-dehydroshikimate (DHSA) to yield shikimate (SA). In Pseudomonas aeruginosa (strain ATCC 15692 / DSM 22644 / CIP 104116 / JCM 14847 / LMG 12228 / 1C / PRS 101 / PAO1), this protein is Shikimate dehydrogenase (NADP(+)).